Consider the following 293-residue polypeptide: Energy-coupling factor transporter ATP-binding protein EcfA2 (293 aa).

Positions 3 to 246 (ITFQKVEHRY…ADELEKIGVD (244 aa)) constitute an ABC transporter domain. 40–47 (GHTGSGKS) serves as a coordination point for ATP.

The protein belongs to the ABC transporter superfamily. Energy-coupling factor EcfA family. As to quaternary structure, forms a stable energy-coupling factor (ECF) transporter complex composed of 2 membrane-embedded substrate-binding proteins (S component), 2 ATP-binding proteins (A component) and 2 transmembrane proteins (T component).

The protein localises to the cell membrane. Functionally, ATP-binding (A) component of a common energy-coupling factor (ECF) ABC-transporter complex. Unlike classic ABC transporters this ECF transporter provides the energy necessary to transport a number of different substrates. The sequence is that of Energy-coupling factor transporter ATP-binding protein EcfA2 from Bacillus anthracis.